The chain runs to 313 residues: Formimidoylglutamase (313 aa).

Residues histidine 130, aspartate 155, histidine 157, aspartate 159, aspartate 241, and aspartate 243 each coordinate Mn(2+).

It belongs to the arginase family. Mn(2+) serves as cofactor.

It carries out the reaction N-formimidoyl-L-glutamate + H2O = formamide + L-glutamate. Its pathway is amino-acid degradation; L-histidine degradation into L-glutamate; L-glutamate from N-formimidoyl-L-glutamate (hydrolase route): step 1/1. Catalyzes the conversion of N-formimidoyl-L-glutamate to L-glutamate and formamide. In Salmonella agona (strain SL483), this protein is Formimidoylglutamase.